Consider the following 347-residue polypeptide: NADH-ubiquinone oxidoreductase chain 2 (347 aa).

Helical transmembrane passes span 13-33 (IFAG…WVGL), 55-75 (AAIK…MAIL), 96-116 (LMIM…FWVP), 123-143 (PLMS…SIMY), 149-169 (LNVN…SWGG), 178-198 (ILAY…PYNP), 201-221 (TILN…LLNL), 247-267 (TLLS…WVII), 274-294 (NSLI…YFYL), and 326-346 (LPTL…MLMI).

Belongs to the complex I subunit 2 family. Core subunit of respiratory chain NADH dehydrogenase (Complex I) which is composed of 45 different subunits. Interacts with TMEM242.

The protein localises to the mitochondrion inner membrane. The enzyme catalyses a ubiquinone + NADH + 5 H(+)(in) = a ubiquinol + NAD(+) + 4 H(+)(out). Core subunit of the mitochondrial membrane respiratory chain NADH dehydrogenase (Complex I) which catalyzes electron transfer from NADH through the respiratory chain, using ubiquinone as an electron acceptor. Essential for the catalytic activity and assembly of complex I. The polypeptide is NADH-ubiquinone oxidoreductase chain 2 (Pan paniscus (Pygmy chimpanzee)).